The chain runs to 231 residues: Octanoyltransferase (231 aa).

Residues 29-231 form the BPL/LPL catalytic domain; sequence PQDPDLLWLC…GRQLCIWLAP (203 aa). Residues 68–75, 164–166, and 177–179 each bind substrate; these read RGGQVTFH, ALG, and GVA. Residue Cys-195 is the Acyl-thioester intermediate of the active site.

It belongs to the LipB family.

The protein resides in the cytoplasm. It carries out the reaction octanoyl-[ACP] + L-lysyl-[protein] = N(6)-octanoyl-L-lysyl-[protein] + holo-[ACP] + H(+). The protein operates within protein modification; protein lipoylation via endogenous pathway; protein N(6)-(lipoyl)lysine from octanoyl-[acyl-carrier-protein]: step 1/2. In terms of biological role, catalyzes the transfer of endogenously produced octanoic acid from octanoyl-acyl-carrier-protein onto the lipoyl domains of lipoate-dependent enzymes. Lipoyl-ACP can also act as a substrate although octanoyl-ACP is likely to be the physiological substrate. The protein is Octanoyltransferase of Verminephrobacter eiseniae (strain EF01-2).